Reading from the N-terminus, the 131-residue chain is Ribosome-binding factor A (131 aa).

Belongs to the RbfA family. In terms of assembly, monomer. Binds 30S ribosomal subunits, but not 50S ribosomal subunits or 70S ribosomes.

It localises to the cytoplasm. Its function is as follows. One of several proteins that assist in the late maturation steps of the functional core of the 30S ribosomal subunit. Associates with free 30S ribosomal subunits (but not with 30S subunits that are part of 70S ribosomes or polysomes). Required for efficient processing of 16S rRNA. May interact with the 5'-terminal helix region of 16S rRNA. The protein is Ribosome-binding factor A of Mannheimia succiniciproducens (strain KCTC 0769BP / MBEL55E).